The chain runs to 664 residues: RBBP8 N-terminal-like protein (664 aa).

The span at 125 to 140 (LRGLGDRPKPRAKEGT) shows a compositional bias: basic and acidic residues. 2 disordered regions span residues 125–284 (LRGL…KLSP) and 369–664 (RAGS…WEET). The segment covering 241–255 (GTPPPLPARSSPPSP) has biased composition (pro residues). A compositionally biased stretch (basic and acidic residues) spans 437–454 (ALDKPLDLSEWGRARGQD). The span at 481–496 (SGPLTRSPQALSNGTK) shows a compositional bias: polar residues. Residues 516–528 (LPGSQLSLSSPGS) are compositionally biased toward low complexity. Positions 537–552 (PLPPPHPQPPPHPQPP) are enriched in pro residues. Residues 554-570 (LDGHPEPSKAEVLRPES) show a composition bias toward basic and acidic residues. Positions 584–597 (GLSSQAEATTSTTG) are enriched in polar residues. Basic residues predominate over residues 628-637 (KKPSRGRRKL). A compositionally biased stretch (polar residues) spans 654–664 (PSPNSSPWEET).

In Homo sapiens (Human), this protein is RBBP8 N-terminal-like protein (RBBP8NL).